A 344-amino-acid chain; its full sequence is Lipase chaperone (344 aa).

The chain crosses the membrane as a helical span at residues 14–34; sequence AVVYGVVGLAAIAGVAMWSGA. Residues 39-78 form a disordered region; it reads ATGASGESPEASVAGGSVTAPPQAAVPASTGLPPSLAGSS.

This sequence belongs to the lipase chaperone family.

It is found in the cell inner membrane. In terms of biological role, may be involved in the folding of the extracellular lipase during its passage through the periplasm. This chain is Lipase chaperone (lifO), found in Pseudomonas sp. (strain KWI-56).